The primary structure comprises 299 residues: Taste receptor type 2 member 50 (299 aa).

Methionine 1 is a topological domain (extracellular). Residues 2 to 22 (ITFLYIFFSILILVLFVLGNF) traverse the membrane as a helical segment. Topologically, residues 23 to 55 (ANGFIALVNFIDWVKRKKISSADQILTALAVSR) are cytoplasmic. A helical transmembrane segment spans residues 56 to 76 (IGLLWALLLNWYLTVLNPAFY). Residues 77–87 (SVELRITSYNA) lie on the Extracellular side of the membrane. A helical transmembrane segment spans residues 88–108 (WVVTNHFSMWLAASLSIFYLL). Topologically, residues 109-126 (KIANFSNLIFLHLKRRVR) are cytoplasmic. The chain crosses the membrane as a helical span at residues 127-147 (SVILVILLGTLIFLVCHLLVA). Residues 148-181 (NMDESMWAEEYEGNMTGKMKLRNTVHLSYLTVTT) are Extracellular-facing. Asparagine 161 carries an N-linked (GlcNAc...) asparagine glycan. Residues 182–202 (LWSFIPFTLSLISFLMLICSL) traverse the membrane as a helical segment. Topologically, residues 203–229 (CKHLKKMQLHGEGSQDLSTKVHIKALQ) are cytoplasmic. The helical transmembrane segment at 230 to 250 (TLISFLLLCAIFFLFLIISVW) threads the bilayer. At 251-259 (SPRRLQNDP) the chain is on the extracellular side. A helical membrane pass occupies residues 260–280 (VVMVSKAVGNIYLAFDSFILI). The Cytoplasmic segment spans residues 281–299 (WRTKKLKHTFLLILCQIRC).

The protein belongs to the G-protein coupled receptor T2R family.

It is found in the membrane. Its function is as follows. Receptor that may play a role in the perception of bitterness and is gustducin-linked. May play a role in sensing the chemical composition of the gastrointestinal content. The activity of this receptor may stimulate alpha gustducin, mediate PLC-beta-2 activation and lead to the gating of TRPM5. The polypeptide is Taste receptor type 2 member 50 (TAS2R50) (Gorilla gorilla gorilla (Western lowland gorilla)).